The sequence spans 241 residues: ATP synthase subunit a (241 aa).

The next 5 membrane-spanning stretches (helical) occupy residues 30 to 50, 91 to 111, 128 to 148, 193 to 213, and 214 to 234; these read GQVF…VVVG, FIGT…LVPW, INTT…AGLS, LVVA…VMFL, and GLFT…YYIG.

It belongs to the ATPase A chain family. As to quaternary structure, F-type ATPases have 2 components, CF(1) - the catalytic core - and CF(0) - the membrane proton channel. CF(1) has five subunits: alpha(3), beta(3), gamma(1), delta(1), epsilon(1). CF(0) has four main subunits: a, b, b' and c.

Its subcellular location is the cellular thylakoid membrane. Its function is as follows. Key component of the proton channel; it plays a direct role in the translocation of protons across the membrane. The sequence is that of ATP synthase subunit a from Prochlorococcus marinus (strain MIT 9211).